Here is an 873-residue protein sequence, read N- to C-terminus: Protein SEY1 (873 aa).

The Cytoplasmic portion of the chain corresponds to 1–750; that stretch reads MVANGHFFAG…KRSAIGGITQ (750 aa). The 259-residue stretch at 50–308 folds into the GB1/RHD3-type G domain; it reads GFNYHLISVF…IPADGFAVYA (259 aa). 60–67 provides a ligand contact to GTP; sequence GSQSTGKS. The interval 677–701 is disordered; that stretch reads LDKWIGHTPSSATPADEEDLTPIGG. Residues 691-701 show a composition bias toward acidic residues; it reads ADEEDLTPIGG. A helical membrane pass occupies residues 751–771; that stretch reads VPLYFYGLLLALGWNEIVAVL. The Lumenal portion of the chain corresponds to 772–774; it reads RNP. A helical transmembrane segment spans residues 775–795; that stretch reads AYFLLLFVCAVTAYVTYQLNL. Topologically, residues 796–873 are cytoplasmic; it reads WGPIIKMTEA…IDDADDDDDF (78 aa). Residues 841–873 are disordered; the sequence is EGYDMSNMKNRKSAGGYQNNRSHIDDADDDDDF.

This sequence belongs to the TRAFAC class dynamin-like GTPase superfamily. GB1/RHD3 GTPase family. RHD3 subfamily.

It is found in the endoplasmic reticulum membrane. Cooperates with the reticulon proteins and tubule-shaping DP1 family proteins to generate and maintain the structure of the tubular endoplasmic reticulum network. Has GTPase activity, which is required for its function in ER organization. The sequence is that of Protein SEY1 from Paracoccidioides lutzii (strain ATCC MYA-826 / Pb01) (Paracoccidioides brasiliensis).